A 222-amino-acid chain; its full sequence is Proteoglycan 3 (222 aa).

A signal peptide spans 1-17 (MKQPLILSFLLLGMVSA). A compositionally biased stretch (basic and acidic residues) spans 27-46 (NPKREESLKQEADGSREQGR). Residues 27–100 (NPKREESLKQ…PKEEDTTHFQ (74 aa)) are disordered. Over residues 71–81 (FEDEEAMESDP) the composition is skewed to acidic residues. Residues 83 to 97 (ALNKDSACPKEEDTT) are compositionally biased toward basic and acidic residues. Residues 105-221 (CKSCNYVLVR…CKSHLPFICS (117 aa)) form the C-type lectin domain. Intrachain disulfides connect C126-C220 and C197-C212.

Expressed in bone marrow, spleen, and thymus. Not detected in heart, liver or lung.

Possesses similar cytotoxic and cytostimulatory activities to PRG2/MBP. The polypeptide is Proteoglycan 3 (Mus musculus (Mouse)).